The primary structure comprises 297 residues: 4-hydroxybenzoate octaprenyltransferase (297 aa).

Transmembrane regions (helical) follow at residues 29-49, 55-75, 102-122, 124-141, 146-166, 169-189, 219-239, 241-261, and 270-290; these read IGTYLLLWPTLWALWIAAEGV, LFIFITGVILMRAAGCVVNDF, AWTLFAVLVGLSFGLVLLTNA, TVYLSFGALALAACYPFM, FYPQVVLGAAFSWGMPMAFTA, GSLPPEAWLLFIANLLWTVAY, VIIVTLQGLALFCLLLAGVRF, LGQWFHLGLVIAAGCFAWEFW, and VCFKAFLHNHWAGLAILAGIV.

This sequence belongs to the UbiA prenyltransferase family. The cofactor is Mg(2+).

It is found in the cell inner membrane. It carries out the reaction all-trans-octaprenyl diphosphate + 4-hydroxybenzoate = 4-hydroxy-3-(all-trans-octaprenyl)benzoate + diphosphate. Its pathway is cofactor biosynthesis; ubiquinone biosynthesis. Catalyzes the prenylation of para-hydroxybenzoate (PHB) with an all-trans polyprenyl group. Mediates the second step in the final reaction sequence of ubiquinone-8 (UQ-8) biosynthesis, which is the condensation of the polyisoprenoid side chain with PHB, generating the first membrane-bound Q intermediate 3-octaprenyl-4-hydroxybenzoate. This is 4-hydroxybenzoate octaprenyltransferase from Stutzerimonas stutzeri (strain A1501) (Pseudomonas stutzeri).